We begin with the raw amino-acid sequence, 312 residues long: Putative clathrin assembly protein At2g01920 (312 aa).

Residues 21–152 (LITATDEKFT…ILYYNKNMIR (132 aa)) enclose the ENTH domain.

The protein localises to the membrane. It localises to the clathrin-coated pit. Its subcellular location is the golgi apparatus. It is found in the cytoplasmic vesicle. The protein resides in the clathrin-coated vesicle. This chain is Putative clathrin assembly protein At2g01920, found in Arabidopsis thaliana (Mouse-ear cress).